We begin with the raw amino-acid sequence, 124 residues long: Snaclec rhodocetin subunit delta (124 aa).

3 disulfide bridges follow: cysteine 1–cysteine 12, cysteine 29–cysteine 120, and cysteine 95–cysteine 112. The C-type lectin domain maps to tyrosine 8 to lysine 121.

Belongs to the snaclec family. As to quaternary structure, heterotetramer of subunit alpha, beta, gamma and delta; only the gamma and the delta subunits are disulfide-linked. Alpha-beta heterodimer and gamma-delta heterodimer associate orthogonally, giving a cruciform conformation. This heterotetramer may covalently dimerizes thanks to the gamma subunit. As to expression, expressed by the venom gland.

Its subcellular location is the secreted. In terms of biological role, potent inhibitor of collagen-induced platelet aggregation. It acts by binding to the integrin alpha2A domain and blocks collagen binding to integrin alpha-2/beta-1 (ITGA2/ITGB1). The gamma/delta subunits mainly contribute to this activity. This chain is Snaclec rhodocetin subunit delta, found in Calloselasma rhodostoma (Malayan pit viper).